A 297-amino-acid chain; its full sequence is Aspartate dehydrogenase domain-containing protein (297 aa).

2 positions are modified to phosphoserine: Ser-24 and Ser-172.

This sequence belongs to the L-aspartate dehydrogenase family.

The chain is Aspartate dehydrogenase domain-containing protein from Rattus norvegicus (Rat).